The sequence spans 130 residues: Small ribosomal subunit protein uS9 (130 aa).

The protein belongs to the universal ribosomal protein uS9 family.

This Brevibacillus brevis (strain 47 / JCM 6285 / NBRC 100599) protein is Small ribosomal subunit protein uS9.